The following is a 126-amino-acid chain: Glycine cleavage system H protein (126 aa).

Positions 21-103 (TVTIGISEHA…YEGGWIVKVK (83 aa)) constitute a Lipoyl-binding domain. Residue K62 is modified to N6-lipoyllysine.

The protein belongs to the GcvH family. In terms of assembly, the glycine cleavage system is composed of four proteins: P, T, L and H. (R)-lipoate serves as cofactor.

Functionally, the glycine cleavage system catalyzes the degradation of glycine. The H protein shuttles the methylamine group of glycine from the P protein to the T protein. The polypeptide is Glycine cleavage system H protein (Vibrio parahaemolyticus serotype O3:K6 (strain RIMD 2210633)).